Consider the following 237-residue polypeptide: GATA zinc finger domain-containing protein 18 (237 aa).

Composition is skewed to low complexity over residues 1–28 and 87–118; these read MAHN…KNNN and NTST…PNSN. 3 disordered regions span residues 1–31, 78–119, and 140–186; these read MAHN…NSEY, PTNT…NSNL, and FEEG…GGCS. Positions 140 to 151 are enriched in acidic residues; the sequence is FEEGDDEEETSS. The segment covering 152 to 167 has biased composition (low complexity); sequence DSDSSSSSSTSSSSSE. The segment at 185–212 adopts a GATA-type zinc-finger fold; the sequence is CSICKTQETPYWRKGKDGDKTVYLCNAC.

The sequence is that of GATA zinc finger domain-containing protein 18 (gtaR) from Dictyostelium discoideum (Social amoeba).